The sequence spans 326 residues: MEMO1 family protein TTHA0924 (326 aa).

This sequence belongs to the MEMO1 family.

This Thermus thermophilus (strain ATCC 27634 / DSM 579 / HB8) protein is MEMO1 family protein TTHA0924.